The primary structure comprises 212 residues: ATP-dependent dethiobiotin synthetase BioD (212 aa).

Position 13-18 (13-18) interacts with ATP; that stretch reads GIGKTV. A Mg(2+)-binding site is contributed by Thr-17. Residue Lys-33 is part of the active site. Ser-37 contacts substrate. Glu-100 contributes to the Mg(2+) binding site. Residues 100-103, 160-161, and 184-186 each bind ATP; these read EGAG, IS, and PLL.

The protein belongs to the dethiobiotin synthetase family. Homodimer. Mg(2+) serves as cofactor.

It is found in the cytoplasm. It catalyses the reaction (7R,8S)-7,8-diammoniononanoate + CO2 + ATP = (4R,5S)-dethiobiotin + ADP + phosphate + 3 H(+). Its pathway is cofactor biosynthesis; biotin biosynthesis; biotin from 7,8-diaminononanoate: step 1/2. Its function is as follows. Catalyzes a mechanistically unusual reaction, the ATP-dependent insertion of CO2 between the N7 and N8 nitrogen atoms of 7,8-diaminopelargonic acid (DAPA, also called 7,8-diammoniononanoate) to form a ureido ring. This is ATP-dependent dethiobiotin synthetase BioD from Brucella abortus (strain S19).